We begin with the raw amino-acid sequence, 43 residues long: Large ribosomal subunit protein uL11 (43 aa).

Belongs to the universal ribosomal protein uL11 family. As to quaternary structure, part of the ribosomal stalk of the 50S ribosomal subunit. Interacts with L10 and the large rRNA to form the base of the stalk. L10 forms an elongated spine to which L12 dimers bind in a sequential fashion forming a multimeric L10(L12)X complex. In terms of processing, one or more lysine residues are methylated.

Functionally, forms part of the ribosomal stalk which helps the ribosome interact with GTP-bound translation factors. The protein is Large ribosomal subunit protein uL11 (rplK) of Streptomyces galbus.